Reading from the N-terminus, the 340-residue chain is UDP-3-O-(3-hydroxymyristoyl)glucosamine N-acyltransferase (340 aa).

His-239 functions as the Proton acceptor in the catalytic mechanism.

This sequence belongs to the transferase hexapeptide repeat family. LpxD subfamily. Homotrimer.

It carries out the reaction a UDP-3-O-[(3R)-3-hydroxyacyl]-alpha-D-glucosamine + a (3R)-hydroxyacyl-[ACP] = a UDP-2-N,3-O-bis[(3R)-3-hydroxyacyl]-alpha-D-glucosamine + holo-[ACP] + H(+). The enzyme catalyses UDP-3-O-[(3R)-3-hydroxytetradecanoyl]-alpha-D-glucosamine + (3R)-hydroxytetradecanoyl-[ACP] = UDP-2-N,3-O-bis[(3R)-3-hydroxytetradecanoyl]-alpha-D-glucosamine + holo-[ACP] + H(+). The protein operates within glycolipid biosynthesis; lipid IV(A) biosynthesis; lipid IV(A) from (3R)-3-hydroxytetradecanoyl-[acyl-carrier-protein] and UDP-N-acetyl-alpha-D-glucosamine: step 3/6. Its function is as follows. Catalyzes the N-acylation of UDP-3-O-(hydroxytetradecanoyl)glucosamine using 3-hydroxytetradecanoyl-ACP as the acyl donor. Is involved in the biosynthesis of lipid A, a phosphorylated glycolipid that anchors the lipopolysaccharide to the outer membrane of the cell. This chain is UDP-3-O-(3-hydroxymyristoyl)glucosamine N-acyltransferase, found in Yersinia pestis bv. Antiqua (strain Antiqua).